The sequence spans 302 residues: ATP synthase gamma chain (302 aa).

The protein belongs to the ATPase gamma chain family. As to quaternary structure, F-type ATPases have 2 components, CF(1) - the catalytic core - and CF(0) - the membrane proton channel. CF(1) has five subunits: alpha(3), beta(3), gamma(1), delta(1), epsilon(1). CF(0) has three main subunits: a, b and c.

Its subcellular location is the cell membrane. Produces ATP from ADP in the presence of a proton gradient across the membrane. The gamma chain is believed to be important in regulating ATPase activity and the flow of protons through the CF(0) complex. The sequence is that of ATP synthase gamma chain from Enterococcus faecalis (strain ATCC 700802 / V583).